The primary structure comprises 208 residues: Small ribosomal subunit protein uS4 (208 aa).

The S4 RNA-binding domain maps to 98-163; that stretch reads QRLDNVVYRM…NPQITRAIEL (66 aa).

Belongs to the universal ribosomal protein uS4 family. In terms of assembly, part of the 30S ribosomal subunit. Contacts protein S5. The interaction surface between S4 and S5 is involved in control of translational fidelity.

One of the primary rRNA binding proteins, it binds directly to 16S rRNA where it nucleates assembly of the body of the 30S subunit. Functionally, with S5 and S12 plays an important role in translational accuracy. This is Small ribosomal subunit protein uS4 from Campylobacter jejuni subsp. jejuni serotype O:6 (strain 81116 / NCTC 11828).